The following is a 187-amino-acid chain: Calmodulin-like protein 30 (187 aa).

The segment at 21 to 47 (KPSRMFSRDRQSSGLSSPGPGGFSQPS) is disordered. Residues 32-47 (SSGLSSPGPGGFSQPS) are compositionally biased toward low complexity. EF-hand domains follow at residues 46-81 (PSVN…LGQE), 82-117 (RAIE…SGGI), 129-152 (FDLN…LGER), and 153-187 (CSLE…SNNV). Positions 59, 61, 63, 65, 70, 95, 97, 99, 106, 130, 132, 134, 136, 141, 166, 168, 170, and 177 each coordinate Ca(2+).

Belongs to the calmodulin family.

Potential calcium sensor. This Arabidopsis thaliana (Mouse-ear cress) protein is Calmodulin-like protein 30.